The chain runs to 196 residues: Dual-action ribosomal maturation protein DarP (196 aa).

The protein belongs to the DarP family.

Its subcellular location is the cytoplasm. Its function is as follows. Member of a network of 50S ribosomal subunit biogenesis factors which assembles along the 30S-50S interface, preventing incorrect 23S rRNA structures from forming. Promotes peptidyl transferase center (PTC) maturation. The protein is Dual-action ribosomal maturation protein DarP of Stenotrophomonas maltophilia (strain R551-3).